A 322-amino-acid chain; its full sequence is Ribonucleoside-diphosphate reductase small subunit (322 aa).

3 residues coordinate Fe cation: aspartate 70, glutamate 101, and histidine 104. Tyrosine 108 is a catalytic residue. Residues glutamate 163, glutamate 197, and histidine 200 each contribute to the Fe cation site.

Belongs to the ribonucleoside diphosphate reductase small chain family. In terms of assembly, heterodimer of a large and a small subunit. The cofactor is Fe cation.

The enzyme catalyses a 2'-deoxyribonucleoside 5'-diphosphate + [thioredoxin]-disulfide + H2O = a ribonucleoside 5'-diphosphate + [thioredoxin]-dithiol. In terms of biological role, provides the precursors necessary for DNA synthesis. Catalyzes the biosynthesis of deoxyribonucleotides from the corresponding ribonucleotides. This chain is Ribonucleoside-diphosphate reductase small subunit (RNR2), found in Plasmodium falciparum (isolate FCR-3 / Gambia).